Consider the following 59-residue polypeptide: MLKRFPTPILKVYWPFFVAGAAVYYGMSKAADLSSNTKEFINDPRNPRFAKGGKFVEVD.

The chain crosses the membrane as a helical span at residues 9–25; the sequence is ILKVYWPFFVAGAAVYY.

This sequence belongs to the ATPase j subunit family. F-type ATPases have 2 components, CF(1) - the catalytic core - and CF(0) - the membrane proton channel. In yeast, the dimeric form of ATP synthase consists of 17 polypeptides: alpha, beta, gamma, delta, epsilon, 4 (B), 5 (OSCP), 6 (A), 8, 9 (C), d, E (Tim11), f, g, h, i/j and k.

It is found in the mitochondrion membrane. Mitochondrial membrane ATP synthase (F(1)F(0) ATP synthase or Complex V) produces ATP from ADP in the presence of a proton gradient across the membrane which is generated by electron transport complexes of the respiratory chain. F-type ATPases consist of two structural domains, F(1) - containing the extramembraneous catalytic core and F(0) - containing the membrane proton channel, linked together by a central stalk and a peripheral stalk. During catalysis, ATP synthesis in the catalytic domain of F(1) is coupled via a rotary mechanism of the central stalk subunits to proton translocation. Part of the complex F(0) domain. Minor subunit located with subunit a in the membrane. This Saccharomyces cerevisiae (strain ATCC 204508 / S288c) (Baker's yeast) protein is ATP synthase subunit J, mitochondrial (ATP18).